Reading from the N-terminus, the 133-residue chain is Large-conductance mechanosensitive channel (133 aa).

The next 3 helical transmembrane spans lie at 8–28 (FAMK…GAFG), 30–50 (IVTS…LGGI), and 73–93 (GQFI…FLFI).

It belongs to the MscL family. As to quaternary structure, homopentamer.

It localises to the cell membrane. Functionally, channel that opens in response to stretch forces in the membrane lipid bilayer. May participate in the regulation of osmotic pressure changes within the cell. In Hathewaya histolytica (Clostridium histolyticum), this protein is Large-conductance mechanosensitive channel.